A 730-amino-acid chain; its full sequence is Rap1 GTPase-activating protein 2 (730 aa).

The Rap-GAP domain maps to Ile-247–Leu-463. 2 disordered regions span residues Met-510 to Ser-668 and Ser-698 to His-730. Polar residues-rich tracts occupy residues Gly-535–Ser-557 and His-597–Ser-612. Residues Pro-617 to Gly-630 show a composition bias toward basic and acidic residues. Positions Arg-631 to Ser-651 are enriched in low complexity. The span at Arg-699–Ser-712 shows a compositional bias: polar residues.

The protein resides in the cytoplasm. Functionally, GTPase activator for the nuclear Ras-related regulatory protein RAP-1A (KREV-1), converting it to the putatively inactive GDP-bound state. This is Rap1 GTPase-activating protein 2 (RAP1GAP2) from Gallus gallus (Chicken).